A 273-amino-acid polypeptide reads, in one-letter code: Dermonecrotic toxin LsaSicTox-alphaIB1bii (273 aa).

Histidine 5 is a catalytic residue. Mg(2+)-binding residues include glutamate 25 and aspartate 27. The active-site Nucleophile is the histidine 41. Cystine bridges form between cysteine 45–cysteine 51 and cysteine 47–cysteine 190. Aspartate 85 serves as a coordination point for Mg(2+).

This sequence belongs to the arthropod phospholipase D family. Class II subfamily. Mg(2+) serves as cofactor. In terms of tissue distribution, expressed by the venom gland.

The protein localises to the secreted. The enzyme catalyses an N-(acyl)-sphingosylphosphocholine = an N-(acyl)-sphingosyl-1,3-cyclic phosphate + choline. It catalyses the reaction an N-(acyl)-sphingosylphosphoethanolamine = an N-(acyl)-sphingosyl-1,3-cyclic phosphate + ethanolamine. The catalysed reaction is a 1-acyl-sn-glycero-3-phosphocholine = a 1-acyl-sn-glycero-2,3-cyclic phosphate + choline. It carries out the reaction a 1-acyl-sn-glycero-3-phosphoethanolamine = a 1-acyl-sn-glycero-2,3-cyclic phosphate + ethanolamine. Its function is as follows. Dermonecrotic toxins cleave the phosphodiester linkage between the phosphate and headgroup of certain phospholipids (sphingolipid and lysolipid substrates), forming an alcohol (often choline) and a cyclic phosphate. This toxin acts on sphingomyelin (SM). It may also act on ceramide phosphoethanolamine (CPE), lysophosphatidylcholine (LPC) and lysophosphatidylethanolamine (LPE), but not on lysophosphatidylserine (LPS), and lysophosphatidylglycerol (LPG). It acts by transphosphatidylation, releasing exclusively cyclic phosphate products as second products. Induces dermonecrosis, hemolysis, increased vascular permeability, edema, inflammatory response, and platelet aggregation. This chain is Dermonecrotic toxin LsaSicTox-alphaIB1bii, found in Loxosceles sabina (Tucson recluse spider).